A 370-amino-acid polypeptide reads, in one-letter code: MSAALRPVPRPGVLAIEAYVPGKSAAPAGVKLHKLSSNETPLGPSPAAVAAMRETASHLELYPDGSAAALRRAIAGKYGLDPARIVCGAGSDELLSLLTYAFMGPGDEGIYSEYGFLVYRIAILAAGGTPVVAPERDHTADVDAILAAVTPRTRIVYLANPNNPTGTYLPFDEVRRLHAGLPGDVLLVLDAAYAEYVRRNDYAAGLELVAESENVVMTRTFSKAYGLAALRIGWMVAPPAVADAVNRIRGPFNLGSPAIAAGAAAVADDAHIAAAVAHNEEWLPKVTRALTEIGLSVTPSVGNFVLIHFPDAPGRGAAEADAFLTARGLILRRVAAYGLPHALRMTIGSAEANEAVIAALRAFVKDHPDA.

At Lys223 the chain carries N6-(pyridoxal phosphate)lysine.

The protein belongs to the class-II pyridoxal-phosphate-dependent aminotransferase family. Histidinol-phosphate aminotransferase subfamily. In terms of assembly, homodimer. Pyridoxal 5'-phosphate is required as a cofactor.

It catalyses the reaction L-histidinol phosphate + 2-oxoglutarate = 3-(imidazol-4-yl)-2-oxopropyl phosphate + L-glutamate. It functions in the pathway amino-acid biosynthesis; L-histidine biosynthesis; L-histidine from 5-phospho-alpha-D-ribose 1-diphosphate: step 7/9. In Methylobacterium sp. (strain 4-46), this protein is Histidinol-phosphate aminotransferase.